Consider the following 201-residue polypeptide: MNNNNKIFQFKLVLLGEAAVGKSSLVLRFVRGHFLDYQESTIGAAFLAQTVCLNDTTVKFEIWDTAGQERYHTLAPMYYRGAQAAIVVYDIRSEDSFERAIKWVKELQRQGSPNIVIALAGNKLDLAAKRKVETAEAQQYAEENGLLFMETSAKTSQNVNELFVEIAKKLPKTPTTRPGSGRVAIAPIDNGNTGKKNKCCN.

GTP is bound by residues Gly16–Ser24, Leu35–Thr41, Asp64–Gln68, Asn122–Asp125, and Ser152–Lys154. Positions Gln38 to Phe46 match the Effector region motif. 2 S-geranylgeranyl cysteine lipidation sites follow: Cys199 and Cys200.

This sequence belongs to the small GTPase superfamily. Rab family.

It localises to the cell membrane. Its subcellular location is the endosome membrane. Regulated by guanine nucleotide exchange factors (GEFs) which promote the exchange of bound GDP for free GTP. In terms of biological role, required for the fusion of plasma membranes and early endosomes. In Dictyostelium discoideum (Social amoeba), this protein is Ras-related protein Rab-5A (rab5A).